The following is a 47-amino-acid chain: Large ribosomal subunit protein uL14c (47 aa).

Belongs to the universal ribosomal protein uL14 family. In terms of assembly, part of the 50S ribosomal subunit.

It is found in the plastid. Its subcellular location is the chloroplast. In terms of biological role, binds to 23S rRNA. In Vigna unguiculata (Cowpea), this protein is Large ribosomal subunit protein uL14c (rpl14).